Consider the following 277-residue polypeptide: 3-methyl-2-oxobutanoate hydroxymethyltransferase (277 aa).

Mg(2+)-binding residues include Asp54 and Asp93. Residues 54 to 55, Asp93, and Lys122 contribute to the 3-methyl-2-oxobutanoate site; that span reads DS. Residue Glu124 participates in Mg(2+) binding. The active-site Proton acceptor is Glu191.

This sequence belongs to the PanB family. In terms of assembly, homodecamer; pentamer of dimers. Mg(2+) is required as a cofactor.

The protein localises to the cytoplasm. The catalysed reaction is 3-methyl-2-oxobutanoate + (6R)-5,10-methylene-5,6,7,8-tetrahydrofolate + H2O = 2-dehydropantoate + (6S)-5,6,7,8-tetrahydrofolate. It functions in the pathway cofactor biosynthesis; (R)-pantothenate biosynthesis; (R)-pantoate from 3-methyl-2-oxobutanoate: step 1/2. Catalyzes the reversible reaction in which hydroxymethyl group from 5,10-methylenetetrahydrofolate is transferred onto alpha-ketoisovalerate to form ketopantoate. This Alkalilimnicola ehrlichii (strain ATCC BAA-1101 / DSM 17681 / MLHE-1) protein is 3-methyl-2-oxobutanoate hydroxymethyltransferase.